Reading from the N-terminus, the 64-residue chain is Large ribosomal subunit protein bL35 (64 aa).

The tract at residues 1–55 (MPKMKTNKSVSARFKLTASGQLKRTRPGKRHKLSKKSSQEKRNLSKQPLVDKGQV) is disordered. Residues 23–35 (KRTRPGKRHKLSK) are compositionally biased toward basic residues.

Belongs to the bacterial ribosomal protein bL35 family.

The chain is Large ribosomal subunit protein bL35 from Chlamydia pneumoniae (Chlamydophila pneumoniae).